Reading from the N-terminus, the 266-residue chain is Glucosamine-6-phosphate deaminase 1 (266 aa).

Catalysis depends on Asp67, which acts as the Proton acceptor; for enolization step. Asn136 acts as the For ring-opening step in catalysis. His138 (proton acceptor; for ring-opening step) is an active-site residue. Residue Glu143 is the For ring-opening step of the active site.

Belongs to the glucosamine/galactosamine-6-phosphate isomerase family. In terms of assembly, homohexamer.

Its subcellular location is the cytoplasm. It catalyses the reaction alpha-D-glucosamine 6-phosphate + H2O = beta-D-fructose 6-phosphate + NH4(+). In terms of biological role, catalyzes the reversible conversion of alpha-D-glucosamine 6-phosphate (GlcN-6P) into beta-D-fructose 6-phosphate (Fru-6P) and ammonium ion, a regulatory reaction step in de novo uridine diphosphate-N-acetyl-alpha-D-glucosamine (UDP-GlcNAc) biosynthesis via hexosamine pathway. The sequence is that of Glucosamine-6-phosphate deaminase 1 (GPI1) from Giardia intestinalis (Giardia lamblia).